The following is a 102-amino-acid chain: Large ribosomal subunit protein bL21 (102 aa).

Belongs to the bacterial ribosomal protein bL21 family. In terms of assembly, part of the 50S ribosomal subunit. Contacts protein L20.

In terms of biological role, this protein binds to 23S rRNA in the presence of protein L20. This chain is Large ribosomal subunit protein bL21, found in Azorhizobium caulinodans (strain ATCC 43989 / DSM 5975 / JCM 20966 / LMG 6465 / NBRC 14845 / NCIMB 13405 / ORS 571).